The following is an 86-amino-acid chain: Large ribosomal subunit protein uL24 (86 aa).

This sequence belongs to the universal ribosomal protein uL24 family. Part of the 50S ribosomal subunit.

Its function is as follows. One of two assembly initiator proteins, it binds directly to the 5'-end of the 23S rRNA, where it nucleates assembly of the 50S subunit. In terms of biological role, one of the proteins that surrounds the polypeptide exit tunnel on the outside of the subunit. This Bdellovibrio bacteriovorus (strain ATCC 15356 / DSM 50701 / NCIMB 9529 / HD100) protein is Large ribosomal subunit protein uL24.